Reading from the N-terminus, the 452-residue chain is Protein phosphatase 1F (452 aa).

One can recognise a PPM-type phosphatase domain in the interval 153-410 (LVSIHAIRNT…DNITVMVVFL (258 aa)). Aspartate 195, glycine 196, aspartate 357, and aspartate 401 together coordinate Mn(2+). A Phosphoserine modification is found at serine 452.

The protein belongs to the PP2C family. Associates with FEM1B. The cofactor is Mg(2+). It depends on Mn(2+) as a cofactor. In terms of tissue distribution, expressed in the liver.

The catalysed reaction is O-phospho-L-seryl-[protein] + H2O = L-seryl-[protein] + phosphate. It carries out the reaction O-phospho-L-threonyl-[protein] + H2O = L-threonyl-[protein] + phosphate. Its function is as follows. Dephosphorylates and concomitantly deactivates CaM-kinase II activated upon autophosphorylation, and CaM-kinases IV and I activated upon phosphorylation by CaM-kinase kinase. Promotes apoptosis. The chain is Protein phosphatase 1F (Ppm1f) from Mus musculus (Mouse).